The primary structure comprises 382 residues: Neuropeptide Y receptor type 1 (382 aa).

The Extracellular segment spans residues 1–33 (MNSTLFSKVENHSIHYNASENSPLLAFENDDCH). Asn-2, Asn-11, and Asn-17 each carry an N-linked (GlcNAc...) asparagine glycan. A helical transmembrane segment spans residues 34–54 (LPLAVIFTLALAYGAVIILGV). Residues 55 to 75 (SGNLALIIIILKQKEMRNVTN) lie on the Cytoplasmic side of the membrane. Residues 76–96 (ILIVNLSFSDLLVAVMCLPFT) form a helical membrane-spanning segment. Topologically, residues 97–115 (FVYTLMDHWVFGETMCKLN) are extracellular. Cys-112 and Cys-197 are joined by a disulfide. A helical membrane pass occupies residues 116 to 136 (PFVQCVSITVSIFSLVLIAVE). At 137–153 (RHQLIINPRGWRPNNRH) the chain is on the cytoplasmic side. Residues 154–174 (AYIGITVIWVLAVASSLPFVI) form a helical membrane-spanning segment. At 175–210 (YQILTDEPFQNVSLAAFKDKYVCFDKFPSDSHRLSY) the chain is on the extracellular side. The chain crosses the membrane as a helical span at residues 211 to 231 (TTLLLVLQYFGPLCFIFICYF). The Cytoplasmic segment spans residues 232 to 259 (KIYIRLKRRNNMMDKIRDSKYRSSETKR). The chain crosses the membrane as a helical span at residues 260-280 (INIMLLSIVVAFAVCWLPLTI). The Extracellular segment spans residues 281–298 (FNTVFDWNHQIIATCNHN). A helical transmembrane segment spans residues 299 to 319 (LLFLLCHLTAMISTCVNPIFY). Residues 320–382 (GFLNKNFQRD…KISMNDNEKV (63 aa)) lie on the Cytoplasmic side of the membrane. Cys-337 carries S-palmitoyl cysteine lipidation. Ser-367 and Ser-375 each carry phosphoserine.

The protein belongs to the G-protein coupled receptor 1 family. As to expression, the alpha form is highly expressed in the brain, heart, kidney, spleen, skeletal muscle, and lung, whereas the beta receptor mRNA was not detected in these tissues. However, the beta form is expressed in mouse embryonic developmental stage (7 and 11 days), bone marrow cells and several hematopoietic cell lines.

Its subcellular location is the cell membrane. In terms of biological role, receptor for neuropeptide Y and peptide YY. This is Neuropeptide Y receptor type 1 (Npy1r) from Mus musculus (Mouse).